The sequence spans 149 residues: Ribonuclease-like 3 (149 aa).

The N-terminal stretch at 1-22 is a signal peptide; it reads MGIHQCTAVVLLLLCASLSTYG. At Gln23 the chain carries Pyrrolidone carboxylic acid. His38 acts as the Proton acceptor in catalysis. Cystine bridges form between Cys48–Cys109, Cys66–Cys120, and Cys84–Cys135. A substrate-binding site is contributed by 67-71; that stretch reads KEVNT. The active-site Proton donor is the His142.

This sequence belongs to the pancreatic ribonuclease family. Cleavage between Arg-55 and Arg-56 is catalyzed by a membrane-localized Gram-negative bacterium protease (OmpT in E.coli). The excised fragment is then transported to the bacterium cytosol for cleavage of the disulfide bridge linking Cys-48 and Cys-109, thus separating the N-terminal and LF-ZF3. LF-ZF3 but not the N-terminal peptide possesses bactericidal activity. As to expression, strongly expressed in the adult liver and gut, and weakly in the heart and testis.

It is found in the secreted. In terms of biological role, ribonuclease. Angiogenic. Plays a role in host defense. Exhibits strong antibacterial activity against Gram-negative bacteria but mild antibacterial activity against Gram-positive bacteria. The RNase activity is not required for the bactericidal activity. The sequence is that of Ribonuclease-like 3 from Danio rerio (Zebrafish).